Consider the following 589-residue polypeptide: Cyclohexane-1,2-dione hydrolase (589 aa).

A thiamine diphosphate-binding site is contributed by E52. Residues 400-480 form a thiamine pyrophosphate binding region; it reads NHTLPMFGGA…VITMVFTNES (81 aa). Residues D451 and N478 each coordinate Mg(2+).

Belongs to the TPP enzyme family. Homodimer. It depends on Mg(2+) as a cofactor. Thiamine diphosphate is required as a cofactor. FAD serves as cofactor.

The enzyme catalyses cyclohexan-1,2-dione + H2O = 6-oxohexanoate + H(+). Its function is as follows. Catalyzes the ring-opening cleavage of the alicyclic alcohol cyclohexane-1,2-dione. This Azoarcus sp protein is Cyclohexane-1,2-dione hydrolase.